We begin with the raw amino-acid sequence, 912 residues long: Type II beta methyltransferase M.BslI (912 aa).

This sequence belongs to the N(4)/N(6)-methyltransferase family. N(4) subfamily.

The enzyme catalyses a 2'-deoxycytidine in DNA + S-adenosyl-L-methionine = an N(4)-methyl-2'-deoxycytidine in DNA + S-adenosyl-L-homocysteine + H(+). Its function is as follows. A beta subtype methylase. Recognizes the double-stranded sequence 5'-CCN(7)GG-3', methylates C-2 on both strands, and protects the DNA from cleavage by the BslI endonuclease. This chain is Type II beta methyltransferase M.BslI (bslIM), found in Bacillus sp. (strain NEB-606).